The sequence spans 443 residues: Leucine/methionine racemase (443 aa).

Pyridoxal 5'-phosphate contacts are provided by residues 110 to 111 and glutamine 247; that span reads GS. Lysine 273 carries the post-translational modification N6-(pyridoxal phosphate)lysine. Residue threonine 302 participates in pyridoxal 5'-phosphate binding.

This sequence belongs to the class-III pyridoxal-phosphate-dependent aminotransferase family. Requires pyridoxal 5'-phosphate as cofactor.

The catalysed reaction is L-leucine = D-leucine. The enzyme catalyses L-methionine = D-methionine. Activity is strongly inhibited by several metal ions, including Co(2+), Zn(2+), Ni(2+), Cu(2+) and Fe(3+), and nonsubstrate amino acids such as L-arginine and L-lysine. Activity is completely abolished in the presence of hydroxylamine, an inhibitor of pyridoxal phosphate-dependent enzymes. Amino acid racemase with moderate substrate specificity. Is primarily active toward leucine, which is the preferred substrate, and methionine. Also exhibits lower levels of activity toward phenylalanine, alanine and serine. The sequence is that of Leucine/methionine racemase from Thermococcus litoralis (strain ATCC 51850 / DSM 5473 / JCM 8560 / NS-C).